The following is a 388-amino-acid chain: L-lactate dehydrogenase (388 aa).

An FMN hydroxy acid dehydrogenase domain is found at 1–380 (MIISAASDYR…SADALSRVTR (380 aa)). Substrate is bound at residue Tyr24. FMN is bound by residues Ser106 and Gln127. Position 129 (Tyr129) interacts with substrate. Thr155 serves as a coordination point for FMN. Arg164 contributes to the substrate binding site. An FMN-binding site is contributed by Lys251. His275 serves as the catalytic Proton acceptor. Position 278 (Arg278) interacts with substrate. 306–330 (DSGIRSGLDVVRMLALGADAVLLGR) contributes to the FMN binding site.

It belongs to the FMN-dependent alpha-hydroxy acid dehydrogenase family. The cofactor is FMN.

It is found in the cell inner membrane. It carries out the reaction (S)-lactate + A = pyruvate + AH2. Functionally, catalyzes the conversion of L-lactate to pyruvate. Is coupled to the respiratory chain. This Xanthomonas euvesicatoria pv. vesicatoria (strain 85-10) (Xanthomonas campestris pv. vesicatoria) protein is L-lactate dehydrogenase.